The primary structure comprises 460 residues: Armadillo repeat-containing protein LFR (460 aa).

Over residues 1–10 the composition is skewed to low complexity; the sequence is MSHVRSAPAG. Residues 1–32 form a disordered region; the sequence is MSHVRSAPAGKSGGGGGSTPAKRGRPFGSTTG. ARM repeat units lie at residues 225–267, 321–360, and 364–405; these read ENET…NLAP, NEPF…NVAE, and DFRL…SLVS.

Interacts with CHR719, SWI3A and SWI3C. As to expression, expressed at low levels in coleoptiles, leaf tongues, mature leaves and nodes during the vegetative phase. Highly expressed in reproductive tissues such as young panicles, early developing seeds, embryos and endosperms.

It is found in the nucleus. In terms of biological role, plays critical roles in both embryo and endosperm development. Required for free nuclei division and cellularization in early endosperm development, by preventing premature cell death in the endosperm. Involved in the regulation of pattern formation and organ differentiation during embryogenesis, by regulating genes involved in the early stages of seed development. The sequence is that of Armadillo repeat-containing protein LFR from Oryza sativa subsp. japonica (Rice).